A 259-amino-acid chain; its full sequence is Caffeoyl-CoA O-methyltransferase (259 aa).

Lysine 33 lines the substrate pocket. S-adenosyl-L-methionine contacts are provided by residues threonine 75, glutamate 97, 99–100, serine 105, aspartate 123, and alanine 152; that span reads GV. Residue aspartate 175 participates in substrate binding. Aspartate 175 is a binding site for a divalent metal cation. Aspartate 177 provides a ligand contact to S-adenosyl-L-methionine. Aspartate 201 and asparagine 202 together coordinate a divalent metal cation. Asparagine 206 provides a ligand contact to substrate.

It belongs to the class I-like SAM-binding methyltransferase superfamily. Cation-dependent O-methyltransferase family. CCoAMT subfamily. A divalent metal cation serves as cofactor.

The enzyme catalyses (E)-caffeoyl-CoA + S-adenosyl-L-methionine = (E)-feruloyl-CoA + S-adenosyl-L-homocysteine + H(+). Its pathway is aromatic compound metabolism; phenylpropanoid biosynthesis. Functionally, methylates caffeoyl-CoA to feruloyl-CoA and 5-hydroxyferuloyl-CoA to sinapoyl-CoA. Plays a role in the synthesis of feruloylated polysaccharides. Involved in the reinforcement of the plant cell wall. Also involved in the responding to wounding or pathogen challenge by the increased formation of cell wall-bound ferulic acid polymers. The protein is Caffeoyl-CoA O-methyltransferase (CCOAOMT) of Pinus taeda (Loblolly pine).